The primary structure comprises 554 residues: MPTINVNKIDLEKLINMSLSDKTIDHKFPMMGVEVEEIFEENNQKIVQFSINPDRPDYLSVEGLARGFRGFIGIDAGLPKYDIYASDLEVYVENVKSRPYCGFAIIKNIIIDDLVLESIINLQEKLHWSIGRDRKKMAIGIHDLDKIEAPFYYKEINGDEIEFEPLGHNELMTPKEVLEKHEKGVKYAHLLRGDKFPIIVDKNNAVISMPPIINGNLTKVGTETRNLLVEITGTDKNAVENTLNIIVCALADRRGTIFSLKLINNGNETISPDLTPDSAEITIDEINTRLGLNLNAGEIIACLKKARYDAQYSYEDENIKITIPAYRTDILNNMDIIKDVAINYGYENFNGNLPVVATIGEKHDIEKKFEFIRNTMIGYGLFEVMNLTLSNQDVLFNKMNENIEDNEYVEVLKPASIEHRVVRPTILPLLLETLANNKHNELPQKIFEVGDCVVIDEKDETLYTHCKNVPKVSAVITHHNANFNEIKGLVEGLIREMNIEYSIDNYKHPSFIEGRCAKIIVDDEIVGYFGELHPEVILNFELGYPVVGFEMEIK.

The B5 domain maps to 274–351 (LTPDSAEITI…INYGYENFNG (78 aa)). The Mg(2+) site is built by Asp329, Asp335, and Asp339.

This sequence belongs to the phenylalanyl-tRNA synthetase beta subunit family. Type 2 subfamily. In terms of assembly, tetramer of two alpha and two beta subunits. The cofactor is Mg(2+).

It is found in the cytoplasm. The catalysed reaction is tRNA(Phe) + L-phenylalanine + ATP = L-phenylalanyl-tRNA(Phe) + AMP + diphosphate + H(+). The sequence is that of Phenylalanine--tRNA ligase beta subunit from Methanococcus aeolicus (strain ATCC BAA-1280 / DSM 17508 / OCM 812 / Nankai-3).